The primary structure comprises 587 residues: Aspartate--tRNA ligase (587 aa).

Glu-174 contributes to the L-aspartate binding site. The aspartate stretch occupies residues 198–201; it reads QTFK. Arg-220 serves as a coordination point for L-aspartate. ATP is bound by residues 220–222 and Gln-229; that span reads RDE. Residue His-447 coordinates L-aspartate. Glu-481 is a binding site for ATP. L-aspartate is bound at residue Arg-488. An ATP-binding site is contributed by 533 to 536; the sequence is GLDR.

The protein belongs to the class-II aminoacyl-tRNA synthetase family. Type 1 subfamily. As to quaternary structure, homodimer.

The protein resides in the cytoplasm. The enzyme catalyses tRNA(Asp) + L-aspartate + ATP = L-aspartyl-tRNA(Asp) + AMP + diphosphate. Its function is as follows. Catalyzes the attachment of L-aspartate to tRNA(Asp) in a two-step reaction: L-aspartate is first activated by ATP to form Asp-AMP and then transferred to the acceptor end of tRNA(Asp). The polypeptide is Aspartate--tRNA ligase (Porphyromonas gingivalis (strain ATCC BAA-308 / W83)).